We begin with the raw amino-acid sequence, 282 residues long: Bis(5'-nucleosyl)-tetraphosphatase, symmetrical (282 aa).

Belongs to the Ap4A hydrolase family.

It catalyses the reaction P(1),P(4)-bis(5'-adenosyl) tetraphosphate + H2O = 2 ADP + 2 H(+). Its function is as follows. Hydrolyzes diadenosine 5',5'''-P1,P4-tetraphosphate to yield ADP. The sequence is that of Bis(5'-nucleosyl)-tetraphosphatase, symmetrical from Citrobacter koseri (strain ATCC BAA-895 / CDC 4225-83 / SGSC4696).